Reading from the N-terminus, the 473-residue chain is Ras-GEF domain-containing family member 1B (473 aa).

The region spanning 34-161 (HDNNLLSGSL…NVQQMMQCLI (128 aa)) is the N-terminal Ras-GEF domain. The Ras-GEF domain maps to 205–453 (DPYTLAQQLT…YLASYESEGP (249 aa)).

Interacts with CCDC124 during cytokinesis. Interacts with Ras family proteins. As to expression, constitutively expressed in brain, intestine and testis. Low constitutive expression, if any, in heart, lung, lymph nodes and thymus. Up-regulated in heart, kidney, liver, lymph nodes, spleen and thymus at day 20 after infection with Trypanosoma cruzi. Not detected in muscle.

The protein localises to the early endosome. The protein resides in the late endosome. It localises to the midbody. Guanine nucleotide exchange factor (GEF) with specificity for RAP2A, it doesn't seems to activate other Ras family proteins (in vitro). The chain is Ras-GEF domain-containing family member 1B (Rasgef1b) from Mus musculus (Mouse).